The sequence spans 507 residues: tRNA (guanine(6)-N(2))-methyltransferase THUMP3 (507 aa).

The THUMP domain maps to lysine 165–leucine 285.

This sequence belongs to the methyltransferase superfamily. Part of the heterodimeric THUMPD3-TRM112 methyltransferase complex; this complex forms an active tRNA methyltransferase, where TRMT112 acts as an activator of the catalytic subunit THUMPD3.

The protein resides in the cytoplasm. It catalyses the reaction guanosine(6) in tRNA + S-adenosyl-L-methionine = N(2)-methylguanosine(6) in tRNA + S-adenosyl-L-homocysteine + H(+). It carries out the reaction guanosine(7) in tRNA + S-adenosyl-L-methionine = N(2)-methylguanosine(7) in tRNA + S-adenosyl-L-homocysteine + H(+). In terms of biological role, catalytic subunit of the THUMPD3-TRM112 methyltransferase complex, that specifically mediates the S-adenosyl-L-methionine-dependent N(2)-methylation of guanosine nucleotide at position 6 (m2G6) in tRNAs. This is one of the major tRNA (guanine-N(2))-methyltransferases. Also catalyzes the S-adenosyl-L-methionine-dependent N(2)-methylation of guanosine nucleotide at position 7 of tRNA(Trp). The protein is tRNA (guanine(6)-N(2))-methyltransferase THUMP3 of Homo sapiens (Human).